The primary structure comprises 404 residues: Probable tRNA sulfurtransferase (404 aa).

In terms of domain architecture, THUMP spans 60–165 (TAVAESLKQV…EEAAYLSYET (106 aa)). Residues 183–184 (ML), 208–209 (HF), Arg-265, Gly-287, and Gln-296 contribute to the ATP site.

Belongs to the ThiI family.

The protein resides in the cytoplasm. The catalysed reaction is [ThiI sulfur-carrier protein]-S-sulfanyl-L-cysteine + a uridine in tRNA + 2 reduced [2Fe-2S]-[ferredoxin] + ATP + H(+) = [ThiI sulfur-carrier protein]-L-cysteine + a 4-thiouridine in tRNA + 2 oxidized [2Fe-2S]-[ferredoxin] + AMP + diphosphate. The enzyme catalyses [ThiS sulfur-carrier protein]-C-terminal Gly-Gly-AMP + S-sulfanyl-L-cysteinyl-[cysteine desulfurase] + AH2 = [ThiS sulfur-carrier protein]-C-terminal-Gly-aminoethanethioate + L-cysteinyl-[cysteine desulfurase] + A + AMP + 2 H(+). Its pathway is cofactor biosynthesis; thiamine diphosphate biosynthesis. In terms of biological role, catalyzes the ATP-dependent transfer of a sulfur to tRNA to produce 4-thiouridine in position 8 of tRNAs, which functions as a near-UV photosensor. Also catalyzes the transfer of sulfur to the sulfur carrier protein ThiS, forming ThiS-thiocarboxylate. This is a step in the synthesis of thiazole, in the thiamine biosynthesis pathway. The sulfur is donated as persulfide by IscS. This Streptococcus pneumoniae serotype 2 (strain D39 / NCTC 7466) protein is Probable tRNA sulfurtransferase.